The chain runs to 910 residues: Lysine-specific demethylase 7 homolog (910 aa).

The span at 1–11 shows a compositional bias: polar residues; sequence MDGNDINIQKN. Disordered stretches follow at residues 1 to 58, 103 to 162, and 183 to 212; these read MDGN…HQTP, NKMG…GSEP, and QEEL…DRCG. Residues 25-35 show a composition bias toward basic and acidic residues; the sequence is QHSDHKNHESA. Polar residues predominate over residues 43 to 58; the sequence is YTASQPALSSTEHQTP. Residues 118–130 are compositionally biased toward basic and acidic residues; sequence PKSEPKIEPHVTD. The segment covering 150-160 has biased composition (polar residues); it reads ESNQNYVSNGS. Basic and acidic residues predominate over residues 200–210; sequence PEQKTPKESDR. Residues 208–290 form a PHD-type zinc finger; it reads SDRCGGCGKF…KFFCPKCVPH (83 aa). The 172-residue stretch at 441–612 folds into the JmjC domain; the sequence is SDNNEMKEIA…MQMRVYHLEN (172 aa). Substrate is bound by residues 505–510, Tyr-518, Lys-525, and His-580; that span reads TDFHVD. Fe cation contacts are provided by His-508 and Asp-510. His-580 serves as a coordination point for Fe cation. Disordered stretches follow at residues 712–790 and 864–910; these read KIQN…PSEV and EAVH…KLKM. Basic residues predominate over residues 748–757; that stretch reads YKKKYTKKAK. Residues 758 to 780 are compositionally biased toward basic and acidic residues; it reads KDNDDAPKVKKAKKEEVPEEKVP.

The protein belongs to the JHDM1 histone demethylase family. JHDM1D subfamily. It depends on Fe(2+) as a cofactor. In terms of tissue distribution, mainly expressed in neurons. Also weakly expressed in some muscle, intestinal and hypodermal cells.

Its subcellular location is the nucleus. Its activity is regulated as follows. Competitively inhibited by 2-hydroxyglutarate. In terms of biological role, histone demethylase required for nervous system development. Specifically demethylates dimethylated 'Lys-9', 'Lys-23' and 'Lys-27' (H3K9me2, H3K23me2 and H3K27me2, respectively) of histone H3, thereby playing a central role in histone code. Promotes mitochondrial stress-induced longevity. The polypeptide is Lysine-specific demethylase 7 homolog (jmjd-1.2) (Caenorhabditis elegans).